Consider the following 412-residue polypeptide: Dihydrolipoyllysine-residue acetyltransferase component of pyruvate dehydrogenase complex (412 aa).

A Lipoyl-binding domain is found at 2-78 (PIKILMPVLS…PVNSLIAVLS (77 aa)). Residue Lys-43 is modified to N6-lipoyllysine. One can recognise a Peripheral subunit-binding (PSBD) domain in the interval 132–169 (FASPLAKRLAKMGNIRLESVKGSGPHGRIVKQDILSYT). Residue His-385 is part of the active site.

This sequence belongs to the 2-oxoacid dehydrogenase family. In terms of assembly, forms a 24-polypeptide structural core with octahedral symmetry. Requires (R)-lipoate as cofactor.

It catalyses the reaction N(6)-[(R)-dihydrolipoyl]-L-lysyl-[protein] + acetyl-CoA = N(6)-[(R)-S(8)-acetyldihydrolipoyl]-L-lysyl-[protein] + CoA. The pyruvate dehydrogenase complex catalyzes the overall conversion of pyruvate to acetyl-CoA and CO(2). It contains multiple copies of three enzymatic components: pyruvate dehydrogenase (E1), dihydrolipoamide acetyltransferase (E2) and lipoamide dehydrogenase (E3). This Rickettsia felis (strain ATCC VR-1525 / URRWXCal2) (Rickettsia azadi) protein is Dihydrolipoyllysine-residue acetyltransferase component of pyruvate dehydrogenase complex (pdhC).